The sequence spans 192 residues: Ubiquitin-conjugating enzyme E2 27 (192 aa).

One can recognise a UBC core domain in the interval 2–150 (IDFSRIQKEL…ARYWTETFAK (149 aa)). Cys88 (glycyl thioester intermediate) is an active-site residue. The region spanning 153-192 (SLEEKVKRLVEMGFGDAQVRSAIESSGGDENLALEKLCSA) is the UBA domain.

Belongs to the ubiquitin-conjugating enzyme family. Expressed in seeds, pistils, siliques, hypocotyls and leaves.

The enzyme catalyses S-ubiquitinyl-[E1 ubiquitin-activating enzyme]-L-cysteine + [E2 ubiquitin-conjugating enzyme]-L-cysteine = [E1 ubiquitin-activating enzyme]-L-cysteine + S-ubiquitinyl-[E2 ubiquitin-conjugating enzyme]-L-cysteine.. The protein operates within protein modification; protein ubiquitination. In terms of biological role, accepts the ubiquitin from the E1 complex and catalyzes its covalent attachment to other proteins. The chain is Ubiquitin-conjugating enzyme E2 27 (UBC27) from Arabidopsis thaliana (Mouse-ear cress).